The sequence spans 37 residues: Alpha-conotoxin-like Kn1.2 (37 aa).

Residues 1-15 are compositionally biased toward basic and acidic residues; the sequence is ESDGAHAKARADKPA. The propeptide occupies 1–22; that stretch reads ESDGAHAKARADKPARSATNRQ. The tract at residues 1-23 is disordered; sequence ESDGAHAKARADKPARSATNRQP. Cystine bridges form between Cys25–Cys31 and Cys26–Cys36. Position 36 is a cysteine amide (Cys36).

This sequence belongs to the conotoxin A superfamily. Expressed by the venom duct.

The protein resides in the secreted. Functionally, alpha-conotoxins act on postsynaptic membranes, they bind to the nicotinic acetylcholine receptors (nAChR) and thus inhibit them. This toxin inhibits high voltage-activated (HVA) calcium channel currents in rat DRG neurons (13% inhibition at 1 uM toxin) probably by activating GABA(B) receptors (GABBR1 and/or GABBR2). This chain is Alpha-conotoxin-like Kn1.2, found in Conus kinoshitai (Kinoshita's cone).